A 268-amino-acid polypeptide reads, in one-letter code: Shikimate dehydrogenase (NADP(+)) (268 aa).

Shikimate is bound by residues 13-15 (SLS) and threonine 60. The active-site Proton acceptor is the lysine 64. Position 76 (glutamate 76) interacts with NADP(+). Residues asparagine 85 and aspartate 100 each coordinate shikimate. NADP(+) is bound by residues 124–128 (GAGGA), 148–153 (NRTMAR), and isoleucine 209. Tyrosine 211 contributes to the shikimate binding site. Glycine 232 contributes to the NADP(+) binding site.

This sequence belongs to the shikimate dehydrogenase family. As to quaternary structure, homodimer.

The catalysed reaction is shikimate + NADP(+) = 3-dehydroshikimate + NADPH + H(+). It participates in metabolic intermediate biosynthesis; chorismate biosynthesis; chorismate from D-erythrose 4-phosphate and phosphoenolpyruvate: step 4/7. Involved in the biosynthesis of the chorismate, which leads to the biosynthesis of aromatic amino acids. Catalyzes the reversible NADPH linked reduction of 3-dehydroshikimate (DHSA) to yield shikimate (SA). The sequence is that of Shikimate dehydrogenase (NADP(+)) from Staphylococcus aureus (strain MSSA476).